The primary structure comprises 406 residues: N-acetylmuramoyl-L-alanine amidase CwlM (406 aa).

Peptidoglycan-binding domain stretches follow at residues 18 to 83 (SAAV…YRAL) and 105 to 160 (GDDV…LRSL). The MurNAc-LAA domain occupies 193-370 (IIIDPGRGGV…IAEGILAAVK (178 aa)).

Belongs to the N-acetylmuramoyl-L-alanine amidase 3 family.

Its subcellular location is the periplasm. It catalyses the reaction Hydrolyzes the link between N-acetylmuramoyl residues and L-amino acid residues in certain cell-wall glycopeptides.. It functions in the pathway cell wall degradation; peptidoglycan degradation. Functionally, cell-wall hydrolase that hydrolyzes the amide bond between N-acetylmuramic acid and L-alanine in cell-wall glycopeptides. Is able to lyse whole mycobacteria, release peptidoglycan from the cell wall of M.luteus and M.smegmatis, and cleave N-acetylmuramoyl-L-alanyl-D-isoglutamine, releasing free N-acetylmuramic acid and dipeptide. This is N-acetylmuramoyl-L-alanine amidase CwlM from Mycobacterium tuberculosis (strain ATCC 25618 / H37Rv).